Here is a 233-residue protein sequence, read N- to C-terminus: Orotidine 5'-phosphate decarboxylase (233 aa).

Substrate is bound by residues Asp10, Lys32, 60-69 (DLKLHDIPAT), Thr115, Arg176, Gln185, Gly205, and Arg206. Lys62 functions as the Proton donor in the catalytic mechanism.

Belongs to the OMP decarboxylase family. Type 1 subfamily. As to quaternary structure, homodimer.

It carries out the reaction orotidine 5'-phosphate + H(+) = UMP + CO2. It participates in pyrimidine metabolism; UMP biosynthesis via de novo pathway; UMP from orotate: step 2/2. Its function is as follows. Catalyzes the decarboxylation of orotidine 5'-monophosphate (OMP) to uridine 5'-monophosphate (UMP). The polypeptide is Orotidine 5'-phosphate decarboxylase (Thermobifida fusca (strain YX)).